A 337-amino-acid polypeptide reads, in one-letter code: MKRPCEETTSESDMDETIDVGSENNYSGQSTSSVIRLNSPTTTSQIMARKKRRGIIEKRRRDRINNSLSELRRLVPTAFEKQGSAKLEKAEILQMTVDHLKMLQATGGKGYFDAHALAMDFMSIGFRECLTEVARYLSSVEGLDSSDPLRVRLVSHLSTCATQREAAAMTSSMAHHHHPLHPHHWAAAFHHLPAALLQPNGLHASESTPCRLSTTSEVPPAHGSALLTATFAHADSALRMPSTGSVAPCVPPLSTSLLSLSATVHAAAAAATAAAHSFPLSFAGAFPMLPPNAAAAVAAATAISPPLSVSATSSPQQTSSGTNNKPYRPWGTEVGAF.

The disordered stretch occupies residues 1–52 (MKRPCEETTSESDMDETIDVGSENNYSGQSTSSVIRLNSPTTTSQIMARKKR). Positions 8 to 18 (TTSESDMDETI) are enriched in acidic residues. The span at 22 to 46 (SENNYSGQSTSSVIRLNSPTTTSQI) shows a compositional bias: polar residues. The segment at 47–116 (MARKKRRGII…GGKGYFDAHA (70 aa)) is transcriptional repression and interaction with NCOR1 and SIN3A. Positions 48–103 (ARKKRRGIIEKRRRDRINNSLSELRRLVPTAFEKQGSAKLEKAEILQMTVDHLKML) constitute a bHLH domain. In terms of domain architecture, Orange spans 122 to 157 (MSIGFRECLTEVARYLSSVEGLDSSDPLRVRLVSHL). Residues 307-325 (LSVSATSSPQQTSSGTNNK) are compositionally biased toward polar residues. Positions 307–337 (LSVSATSSPQQTSSGTNNKPYRPWGTEVGAF) are disordered. A YRPW motif motif is present at residues 327–330 (YRPW).

Belongs to the HEY family. In terms of assembly, may self-associate. Interacts with GATA4, HES1 and HEYL. Interacts with HDAC1, NCOR1 and SIN3A. Interacts with ARNT and GATA6.

It is found in the nucleus. Functionally, downstream effector of Notch signaling which may be required for cardiovascular development. Transcriptional repressor which binds preferentially to the canonical E box sequence 5'-CACGTG-3'. Represses transcription by the cardiac transcriptional activators GATA4 and GATA6. This Homo sapiens (Human) protein is Hairy/enhancer-of-split related with YRPW motif protein 2 (HEY2).